The following is a 106-amino-acid chain: uncharacterized protein (106 aa).

It localises to the mitochondrion. This is an uncharacterized protein from Arabidopsis thaliana (Mouse-ear cress).